A 208-amino-acid chain; its full sequence is MVSRRVQALLDQLRAQGIQDEQVLNALAAVPREKFVDEAFEQKAWDNIALPIGQGQTISQPYMVARMTELLELTPQSRVLEIGTGSGYQTAILAHLVQHVCSVERIKGLQWQARRRLKNLDLHNVSTRHGDGWQGWQARAPFDAIIVTAAPPEIPTALMTQLDEGGILVLPVGEEHQYLKRVRRRGGEFIIDTVEAVRFVPLVKGELA.

Residue Ser59 is part of the active site.

It belongs to the methyltransferase superfamily. L-isoaspartyl/D-aspartyl protein methyltransferase family.

It localises to the cytoplasm. The catalysed reaction is [protein]-L-isoaspartate + S-adenosyl-L-methionine = [protein]-L-isoaspartate alpha-methyl ester + S-adenosyl-L-homocysteine. Functionally, catalyzes the methyl esterification of L-isoaspartyl residues in peptides and proteins that result from spontaneous decomposition of normal L-aspartyl and L-asparaginyl residues. It plays a role in the repair and/or degradation of damaged proteins. The protein is Protein-L-isoaspartate O-methyltransferase of Escherichia coli (strain K12 / MC4100 / BW2952).